We begin with the raw amino-acid sequence, 438 residues long: POU domain, class 3, transcription factor 3-A (438 aa).

Disordered stretches follow at residues 22–43 (VHSE…SVSG), 102–172 (SPWS…QSQQ), and 186–248 (GMLN…PTSD). Composition is skewed to polar residues over residues 103 to 123 (PWSS…VKSS) and 146 to 159 (QSHQ…TASH). Positions 160 to 172 (ISTITGGQQQSQQ) are enriched in low complexity. A compositionally biased stretch (basic residues) spans 210–230 (HHHHHHHQQQHPHHHHHHQHH). A POU-specific domain is found at 242–316 (EDTPTSDDLE…LLNKWLEEAD (75 aa)). The segment at residues 334 to 393 (KRKKRTSIEVSVKGALESHFLKCPKPSAQEITSLADNLQLEKEVVRVWFCNRRQKEKRMT) is a DNA-binding region (homeobox).

The protein belongs to the POU transcription factor family. Class-3 subfamily. Predominantly expressed in the embryonic and adult central nervous system. In adults, isoform 2 is expressed in the brain, ovary, basal cells of the skin and muscle satellite cells.

It localises to the nucleus. Its function is as follows. Transcription factor that may play important roles in patterning the embryonic brain. The polypeptide is POU domain, class 3, transcription factor 3-A (pou3f3a) (Danio rerio (Zebrafish)).